Reading from the N-terminus, the 353-residue chain is Photosystem II D2 protein (353 aa).

Residue threonine 2 is modified to N-acetylthreonine. At threonine 2 the chain carries Phosphothreonine. Residues 41-61 (CAYFALGGWFTGTTFVTSWYT) form a helical membrane-spanning segment. Histidine 118 is a chlorophyll a binding site. The chain crosses the membrane as a helical span at residues 125-141 (GFMLRQFELARSVQLRP). Residues glutamine 130 and asparagine 143 each contribute to the pheophytin a site. Residues 153 to 166 (VFVSVFLIYPLGQS) traverse the membrane as a helical segment. Position 198 (histidine 198) interacts with chlorophyll a. Residues 208–228 (AALLCAIHGATVENTLFEDGD) traverse the membrane as a helical segment. A plastoquinone contacts are provided by histidine 215 and phenylalanine 262. Histidine 215 provides a ligand contact to Fe cation. Fe cation is bound at residue histidine 269. Residues 279–295 (GLWMSAIGVVGLALNLR) form a helical membrane-spanning segment.

The protein belongs to the reaction center PufL/M/PsbA/D family. As to quaternary structure, PSII is composed of 1 copy each of membrane proteins PsbA, PsbB, PsbC, PsbD, PsbE, PsbF, PsbH, PsbI, PsbJ, PsbK, PsbL, PsbM, PsbT, PsbX, PsbY, PsbZ, Psb30/Ycf12, at least 3 peripheral proteins of the oxygen-evolving complex and a large number of cofactors. It forms dimeric complexes. The D1/D2 heterodimer binds P680, chlorophylls that are the primary electron donor of PSII, and subsequent electron acceptors. It shares a non-heme iron and each subunit binds pheophytin, quinone, additional chlorophylls, carotenoids and lipids. There is also a Cl(-1) ion associated with D1 and D2, which is required for oxygen evolution. The PSII complex binds additional chlorophylls, carotenoids and specific lipids. serves as cofactor.

It is found in the plastid. It localises to the chloroplast thylakoid membrane. It carries out the reaction 2 a plastoquinone + 4 hnu + 2 H2O = 2 a plastoquinol + O2. Functionally, photosystem II (PSII) is a light-driven water:plastoquinone oxidoreductase that uses light energy to abstract electrons from H(2)O, generating O(2) and a proton gradient subsequently used for ATP formation. It consists of a core antenna complex that captures photons, and an electron transfer chain that converts photonic excitation into a charge separation. The D1/D2 (PsbA/PsbD) reaction center heterodimer binds P680, the primary electron donor of PSII as well as several subsequent electron acceptors. D2 is needed for assembly of a stable PSII complex. The polypeptide is Photosystem II D2 protein (Oryza nivara (Indian wild rice)).